A 755-amino-acid chain; its full sequence is Biodegradative arginine decarboxylase (755 aa).

Residue Lys386 is modified to N6-(pyridoxal phosphate)lysine.

Belongs to the Orn/Lys/Arg decarboxylase class-I family. Homodecamer. The basic unit is a homodimer, organized into a ring of giving a pentamer of five homodimers. Pyridoxal 5'-phosphate is required as a cofactor.

The protein resides in the cytoplasm. The enzyme catalyses L-arginine + H(+) = agmatine + CO2. With respect to regulation, homodimers are probably inactive, their assembly into a homodecamer at low pH requires neutralization of negatively charged residues. This uses cytoplasmic protons, contributing pH regulation and stabilizes the homodecamer. Its function is as follows. Component of the acid-resistance (AR) system allowing enteric pathogens to survive the acidic environment in the stomach. ADC can be found in two forms: biodegradative (this enzyme) and biosynthetic (speA). The biodegradative form plays a role in regulating pH by consuming proteins. Converts arginine imported by AdiC to agmatine which is then exported by AdiC. This chain is Biodegradative arginine decarboxylase (adiA), found in Escherichia coli (strain K12).